The following is a 223-amino-acid chain: Phosphoribosylformylglycinamidine synthase subunit PurQ (223 aa).

In terms of domain architecture, Glutamine amidotransferase type-1 spans 4–223; that stretch reads KIGVITFPGT…FLSAIGTIAA (220 aa). Catalysis depends on Cys-87, which acts as the Nucleophile. Residues His-195 and Glu-197 contribute to the active site.

In terms of assembly, part of the FGAM synthase complex composed of 1 PurL, 1 PurQ and 2 PurS subunits.

It is found in the cytoplasm. It catalyses the reaction N(2)-formyl-N(1)-(5-phospho-beta-D-ribosyl)glycinamide + L-glutamine + ATP + H2O = 2-formamido-N(1)-(5-O-phospho-beta-D-ribosyl)acetamidine + L-glutamate + ADP + phosphate + H(+). It carries out the reaction L-glutamine + H2O = L-glutamate + NH4(+). It participates in purine metabolism; IMP biosynthesis via de novo pathway; 5-amino-1-(5-phospho-D-ribosyl)imidazole from N(2)-formyl-N(1)-(5-phospho-D-ribosyl)glycinamide: step 1/2. In terms of biological role, part of the phosphoribosylformylglycinamidine synthase complex involved in the purines biosynthetic pathway. Catalyzes the ATP-dependent conversion of formylglycinamide ribonucleotide (FGAR) and glutamine to yield formylglycinamidine ribonucleotide (FGAM) and glutamate. The FGAM synthase complex is composed of three subunits. PurQ produces an ammonia molecule by converting glutamine to glutamate. PurL transfers the ammonia molecule to FGAR to form FGAM in an ATP-dependent manner. PurS interacts with PurQ and PurL and is thought to assist in the transfer of the ammonia molecule from PurQ to PurL. The sequence is that of Phosphoribosylformylglycinamidine synthase subunit PurQ from Corynebacterium efficiens (strain DSM 44549 / YS-314 / AJ 12310 / JCM 11189 / NBRC 100395).